Reading from the N-terminus, the 276-residue chain is Pantothenate synthetase (276 aa).

26–33 lines the ATP pocket; that stretch reads MGFLHEGH. Catalysis depends on H33, which acts as the Proton donor. Q57 lines the (R)-pantoate pocket. Q57 lines the beta-alanine pocket. 142 to 145 lines the ATP pocket; that stretch reads GLKD. Residue Q148 participates in (R)-pantoate binding. Residues I171 and 179 to 182 contribute to the ATP site; that span reads KSSR.

The protein belongs to the pantothenate synthetase family. In terms of assembly, homodimer.

Its subcellular location is the cytoplasm. The catalysed reaction is (R)-pantoate + beta-alanine + ATP = (R)-pantothenate + AMP + diphosphate + H(+). It participates in cofactor biosynthesis; (R)-pantothenate biosynthesis; (R)-pantothenate from (R)-pantoate and beta-alanine: step 1/1. Catalyzes the condensation of pantoate with beta-alanine in an ATP-dependent reaction via a pantoyl-adenylate intermediate. This is Pantothenate synthetase from Exiguobacterium sibiricum (strain DSM 17290 / CCUG 55495 / CIP 109462 / JCM 13490 / 255-15).